Reading from the N-terminus, the 263-residue chain is Regulatory protein RecX (263 aa).

Belongs to the RecX family.

Its subcellular location is the cytoplasm. Modulates RecA activity. This is Regulatory protein RecX from Bacillus velezensis (strain DSM 23117 / BGSC 10A6 / LMG 26770 / FZB42) (Bacillus amyloliquefaciens subsp. plantarum).